The chain runs to 322 residues: Probable ethanolamine-phosphate cytidylyltransferase (322 aa).

Belongs to the cytidylyltransferase family.

It catalyses the reaction phosphoethanolamine + CTP + H(+) = CDP-ethanolamine + diphosphate. Its pathway is phospholipid metabolism; phosphatidylethanolamine biosynthesis; phosphatidylethanolamine from ethanolamine: step 2/3. The chain is Probable ethanolamine-phosphate cytidylyltransferase (MUQ1) from Encephalitozoon cuniculi (strain GB-M1) (Microsporidian parasite).